A 201-amino-acid polypeptide reads, in one-letter code: Potassium-transporting ATPase KdpC subunit (201 aa).

The chain crosses the membrane as a helical span at residues 13–33 (IIFIIFTILCGGIYTIFITGI).

Belongs to the KdpC family. As to quaternary structure, the system is composed of three essential subunits: KdpA, KdpB and KdpC.

Its subcellular location is the cell membrane. Part of the high-affinity ATP-driven potassium transport (or Kdp) system, which catalyzes the hydrolysis of ATP coupled with the electrogenic transport of potassium into the cytoplasm. This subunit acts as a catalytic chaperone that increases the ATP-binding affinity of the ATP-hydrolyzing subunit KdpB by the formation of a transient KdpB/KdpC/ATP ternary complex. The protein is Potassium-transporting ATPase KdpC subunit of Clostridium botulinum (strain Alaska E43 / Type E3).